The following is a 275-amino-acid chain: 2,3,4,5-tetrahydropyridine-2,6-dicarboxylate N-succinyltransferase (275 aa).

It belongs to the transferase hexapeptide repeat family.

The protein resides in the cytoplasm. It catalyses the reaction (S)-2,3,4,5-tetrahydrodipicolinate + succinyl-CoA + H2O = (S)-2-succinylamino-6-oxoheptanedioate + CoA. It participates in amino-acid biosynthesis; L-lysine biosynthesis via DAP pathway; LL-2,6-diaminopimelate from (S)-tetrahydrodipicolinate (succinylase route): step 1/3. The polypeptide is 2,3,4,5-tetrahydropyridine-2,6-dicarboxylate N-succinyltransferase (Paraburkholderia phytofirmans (strain DSM 17436 / LMG 22146 / PsJN) (Burkholderia phytofirmans)).